The sequence spans 376 residues: Heme-dependent oxidative N-demethylase gamma subunit (376 aa).

As to quaternary structure, the heme-dependent oxidative N-demethylase (HODM) is a heterotetramer composed of a catalytic alpha subunit, a FMN/2Fe-2S-dependent oxidoreductase beta subunit, a gamma subunit with putative aminotransferase activity, and a delta subunit of unknown function.

In terms of biological role, component of the heme-dependent oxidative N-demethylase (HODM) enzyme, that catalyzes the NADPH-dependent oxidation of dimethylamine (DMA) to methylamine (MA) and formaldehyde. Functions in bacterial methylated amine catabolism, linking alkylamine oxidation to the tetrahydrofolate C1 pool. The gamma subunit of HODM may act as an aminomethyltransferase involved in the detoxification of formaldehyde released by the alpha subunit; this process requires tetrahydrofolate (THF). In Ectopseudomonas mendocina (strain ymp) (Pseudomonas mendocina), this protein is Heme-dependent oxidative N-demethylase gamma subunit.